A 214-amino-acid chain; its full sequence is Nascent polypeptide-associated complex subunit alpha (214 aa).

The tract at residues 1–80 (MPGEATETVP…SEKKARKAMS (80 aa)) is disordered. Residues 29 to 40 (SDSDDSPPELEQ) show a composition bias toward acidic residues. The span at 41–56 (DSTQTTTQQAQLAAAA) shows a compositional bias: low complexity. Residues 69 to 134 (SRSEKKARKA…AKIEDLSQQA (66 aa)) enclose the NAC-A/B domain. The UBA domain maps to 175-212 (VEVKDIELVMSQANVSRAKAVRALKNNSNDIVNAIMEL).

The protein belongs to the NAC-alpha family.

May promote appropriate targeting of ribosome-nascent polypeptide complexes. This chain is Nascent polypeptide-associated complex subunit alpha (naca), found in Xenopus tropicalis (Western clawed frog).